A 459-amino-acid chain; its full sequence is Argininosuccinate lyase (459 aa).

The protein belongs to the lyase 1 family. Argininosuccinate lyase subfamily.

Its subcellular location is the cytoplasm. It carries out the reaction 2-(N(omega)-L-arginino)succinate = fumarate + L-arginine. It participates in amino-acid biosynthesis; L-arginine biosynthesis; L-arginine from L-ornithine and carbamoyl phosphate: step 3/3. The sequence is that of Argininosuccinate lyase from Lactococcus lactis subsp. cremoris (strain SK11).